An 827-amino-acid polypeptide reads, in one-letter code: Translation initiation factor IF-2 (827 aa).

The interval 49 to 205 (ALNREKEEKE…GAPDKKREWE (157 aa)) is disordered. 6 stretches are compositionally biased toward basic and acidic residues: residues 50–73 (LNRE…KAEA), 96–106 (RPREQRSDRPQ), 116–129 (PEPR…RPGE), 137–150 (RPRD…KERG), 157–168 (FGEKKERPPFPR), and 182–205 (EAPK…REWE). One can recognise a tr-type G domain in the interval 326 to 495 (PRPPIVTVMG…LLVADLKELK (170 aa)). Residues 335-342 (GHVDHGKT) are G1. 335-342 (GHVDHGKT) is a GTP binding site. A G2 region spans residues 360-364 (GITQH). A G3 region spans residues 381-384 (DTPG). Residues 381–385 (DTPGH) and 435–438 (NKID) each bind GTP. The segment at 435–438 (NKID) is G4. The segment at 471–473 (SAL) is G5.

Belongs to the TRAFAC class translation factor GTPase superfamily. Classic translation factor GTPase family. IF-2 subfamily.

Its subcellular location is the cytoplasm. In terms of biological role, one of the essential components for the initiation of protein synthesis. Protects formylmethionyl-tRNA from spontaneous hydrolysis and promotes its binding to the 30S ribosomal subunits. Also involved in the hydrolysis of GTP during the formation of the 70S ribosomal complex. This Carboxydothermus hydrogenoformans (strain ATCC BAA-161 / DSM 6008 / Z-2901) protein is Translation initiation factor IF-2.